Reading from the N-terminus, the 435-residue chain is Nuclear hormone receptor family member nhr-14 (435 aa).

The nuclear receptor DNA-binding region spans 17 to 92 (ADFCVVCGDK…DGMKPEAIQN (76 aa)). NR C4-type zinc fingers lie at residues 20–40 (CVVCGDKAIGKHYGAVACNGC) and 56–80 (CRFNKQCNIDKDHRNACRYCRFQKC). The interval 91–126 (QNERDRIGSTKRRKRSGANSENNSDSEGTPSPKIEV) is disordered. Over residues 107 to 119 (GANSENNSDSEGT) the composition is skewed to polar residues. Residues 131 to 355 (VSRKLIEMLL…KRDTISPKIE (225 aa)) form the NR LBD domain.

It belongs to the nuclear hormone receptor family. As to expression, expressed in intestine and head neurons in young adults.

The protein localises to the nucleus. Orphan nuclear receptor. Transcriptional repressor of intestinal metal transporter smf-3 and genes of the innate immune response. Inhibits nuclear localization of transcription factor pqm-1; in response to pathogen stress, may facilitate translocation of pqm-1, leading to transcriptional activation of genes involved in innate immunity and iron uptake. The polypeptide is Nuclear hormone receptor family member nhr-14 (nhr-14) (Caenorhabditis elegans).